Consider the following 393-residue polypeptide: Pyridoxamine--pyruvate transaminase (393 aa).

Pyridoxal 5'-phosphate is bound by residues E68, Y95, and T146. An N6-(pyridoxal phosphate)lysine modification is found at K197. R345 contacts pyridoxal 5'-phosphate.

Belongs to the class-V pyridoxal-phosphate-dependent aminotransferase family. In terms of assembly, homotetramer. Pyridoxal 5'-phosphate is required as a cofactor.

It carries out the reaction pyridoxamine + pyruvate = pyridoxal + L-alanine. Functionally, catalyzes a reversible transamination reaction between pyridoxamine and pyruvate to form pyridoxal and L-alanine. The polypeptide is Pyridoxamine--pyruvate transaminase (ppaT) (Mesorhizobium japonicum (strain LMG 29417 / CECT 9101 / MAFF 303099) (Mesorhizobium loti (strain MAFF 303099))).